The sequence spans 322 residues: DNA repair and recombination protein RadA (322 aa).

105-112 (GMYGSGKT) is an ATP binding site.

This sequence belongs to the eukaryotic RecA-like protein family.

Involved in DNA repair and in homologous recombination. Binds and assemble on single-stranded DNA to form a nucleoprotein filament. Hydrolyzes ATP in a ssDNA-dependent manner and promotes DNA strand exchange between homologous DNA molecules. This chain is DNA repair and recombination protein RadA, found in Methanococcus maripaludis (strain C6 / ATCC BAA-1332).